Here is a 240-residue protein sequence, read N- to C-terminus: Biosynthetic peptidoglycan transglycosylase (240 aa).

Residues 15–35 traverse the membrane as a helical segment; that stretch reads WMVYLGAVVAIAWLATQAFYF.

It belongs to the glycosyltransferase 51 family.

The protein resides in the cell inner membrane. The catalysed reaction is [GlcNAc-(1-&gt;4)-Mur2Ac(oyl-L-Ala-gamma-D-Glu-L-Lys-D-Ala-D-Ala)](n)-di-trans,octa-cis-undecaprenyl diphosphate + beta-D-GlcNAc-(1-&gt;4)-Mur2Ac(oyl-L-Ala-gamma-D-Glu-L-Lys-D-Ala-D-Ala)-di-trans,octa-cis-undecaprenyl diphosphate = [GlcNAc-(1-&gt;4)-Mur2Ac(oyl-L-Ala-gamma-D-Glu-L-Lys-D-Ala-D-Ala)](n+1)-di-trans,octa-cis-undecaprenyl diphosphate + di-trans,octa-cis-undecaprenyl diphosphate + H(+). Its pathway is cell wall biogenesis; peptidoglycan biosynthesis. Its function is as follows. Peptidoglycan polymerase that catalyzes glycan chain elongation from lipid-linked precursors. This chain is Biosynthetic peptidoglycan transglycosylase, found in Paraburkholderia phytofirmans (strain DSM 17436 / LMG 22146 / PsJN) (Burkholderia phytofirmans).